Here is a 376-residue protein sequence, read N- to C-terminus: 23S rRNA (uracil(747)-C(5))-methyltransferase RlmC (376 aa).

[4Fe-4S] cluster-binding residues include C3, C11, C14, and C87. The S-adenosyl-L-methionine site is built by Q212, F241, E262, and N307. C334 serves as the catalytic Nucleophile.

Belongs to the class I-like SAM-binding methyltransferase superfamily. RNA M5U methyltransferase family. RlmC subfamily.

It carries out the reaction uridine(747) in 23S rRNA + S-adenosyl-L-methionine = 5-methyluridine(747) in 23S rRNA + S-adenosyl-L-homocysteine + H(+). In terms of biological role, catalyzes the formation of 5-methyl-uridine at position 747 (m5U747) in 23S rRNA. The chain is 23S rRNA (uracil(747)-C(5))-methyltransferase RlmC from Yersinia pseudotuberculosis serotype I (strain IP32953).